A 388-amino-acid polypeptide reads, in one-letter code: S-adenosylmethionine synthase (388 aa).

His16 contacts ATP. Residue Asp18 coordinates Mg(2+). Glu44 contacts K(+). Residues Glu57 and Gln100 each contribute to the L-methionine site. The flexible loop stretch occupies residues 100 to 110 (QSPEIAQGVDR). Residues 165–167 (DAK), 231–232 (KF), Asp240, 246–247 (RK), Ala263, and Lys267 each bind ATP. Position 240 (Asp240) interacts with L-methionine. Lys271 provides a ligand contact to L-methionine.

Belongs to the AdoMet synthase family. As to quaternary structure, homotetramer; dimer of dimers. The cofactor is Mg(2+). K(+) is required as a cofactor.

It is found in the cytoplasm. It carries out the reaction L-methionine + ATP + H2O = S-adenosyl-L-methionine + phosphate + diphosphate. Its pathway is amino-acid biosynthesis; S-adenosyl-L-methionine biosynthesis; S-adenosyl-L-methionine from L-methionine: step 1/1. Functionally, catalyzes the formation of S-adenosylmethionine (AdoMet) from methionine and ATP. The overall synthetic reaction is composed of two sequential steps, AdoMet formation and the subsequent tripolyphosphate hydrolysis which occurs prior to release of AdoMet from the enzyme. The chain is S-adenosylmethionine synthase from Psychrobacter sp. (strain PRwf-1).